The sequence spans 503 residues: MEFSVKSGSPEKQRSACIVVGVFEPRRLSPIAEQLDKISDGYISALLRRGELEGKPGQTLLLHHVPNVLSERILLIGCGKERELDERQYKQVIQKTINTLNDTGSMEAVCFLTELHVKGRNNYWKVRQAVETAKETLYSFDQLKTNKSEPRRPLRKMVFNVPTRRELTSGERAIQHGLAIAAGIKAAKDLGNMPPNICNAAYLASQARQLADSYSKKVITRVIGEQQMRELGMNAYLAVGHGSQNESLMSVIEYKGNPSEDARPIVLVGKGLTFDSGGISIKPSEGMDEMKYDMCGAAAVYGVMRMVAELQLPINVIGVLAGCENMPGGRAYRPGDVLTTMSGQTVEVLNTDAEGRLVLCDVLTYVERFEPEAVIDVATLTGACVIALGHHITGLMSNHNPLAHELLGASEQAGDRAWRLPLGDEYQEQLESNFADMANIGGRPGGAITAGCFLSRFTRKYNWAHLDIAGTAWRSGKAKGATGRPVALLSQFLLNRAGFNGEE.

Residues lysine 270 and aspartate 275 each contribute to the Mn(2+) site. Lysine 282 is a catalytic residue. The Mn(2+) site is built by aspartate 293, aspartate 352, and glutamate 354. Arginine 356 is a catalytic residue.

It belongs to the peptidase M17 family. The cofactor is Mn(2+).

It localises to the cytoplasm. The catalysed reaction is Release of an N-terminal amino acid, Xaa-|-Yaa-, in which Xaa is preferably Leu, but may be other amino acids including Pro although not Arg or Lys, and Yaa may be Pro. Amino acid amides and methyl esters are also readily hydrolyzed, but rates on arylamides are exceedingly low.. The enzyme catalyses Release of an N-terminal amino acid, preferentially leucine, but not glutamic or aspartic acids.. Functionally, presumably involved in the processing and regular turnover of intracellular proteins. Catalyzes the removal of unsubstituted N-terminal amino acids from various peptides. The chain is Probable cytosol aminopeptidase from Salmonella arizonae (strain ATCC BAA-731 / CDC346-86 / RSK2980).